A 1221-amino-acid polypeptide reads, in one-letter code: MSRGMTTEGASLTAAASSSASTWLTESTPSTPSSSGSSYPALSTFSSCSNSASSPDEADPMSEMSPKISVASMILLKDMEEFLHLYVSSANMHPSNFVRHHIESFDDMLWNEFPAMVAREKPVSVKGYRVKFGTVRYEPPCPDGKPWEKLTPAMARRTDATYHSAAVCDLTVTDPKGLETVYPRLELCKIPVMVGSAVCWTRTEGSPLPGECPSDPGGYFIIKGKERVVVPHIRPAYDQPCVYKNGDGWLCEFRSVNRETRQTVLVQAKTDCRRKLEFSLPYIKQYVPVGLVFKALGKTAREAVAMCGLGSFLGDEVSCRTVHHQSMAALLMEQHASAPEDPVADLAKHVPDGRSVYSKQAEGAKQAKYADRASVEEDRNAKGSKEDYVRHVLAGEIFLHGGDAAEHLGWMVKRMADAASGIGTCTDRDDLANKRVDATGPLIAFLLDGLLKQYVKLFVKSAGCQKNLCPYTVLQNSMVMTNSLHMCFATGNWTVKRLGPPSYVRVGVSQVLSNNNYGARVSHLRRIMHAVSFRGKNIRMRQLHSSHYGFLCPYETPEGEKVGIVLNMAEGAGFSLETPREVVLATVRLGKGLPGFFEGAPARLAWSGAAGSASVDVDGVLCGVTGDPVGFVREARLCLPGVSVVWKKVEREIHLLGCQGRFVRRVLDPEGIRGSGYDSPPAPEERDIEMDPAPSSSPSDSLPCPPGVYVCAQELSVCSLGDGEYADPPASEILTDAMSSVIPFYDHTQSPRNAYQSNMGKQAIGFPAVNCSDRYDATLHRLDYPQKSLVDSRSVKRLGFDEMAHGALPVVAIMTAGGFNQEDSVVLNASSLDRGLFSCVTYRTVSCADKRRTKYDSEVVCLPDWGLRNREWDYDLLGDDGVIDPSCAGALARRVEGKRKAAKRPAGQRTGGGPAGLCDALWIPAGTVLVGKVSHSLGPGGNPMRRDVSLTVKQSEEGYLDRVTVDVDSDGKKLVKVRLRTPRHPEMGDKFASFTAQKGTCGAVLTQEDMPFDKDGVVPDLIINPHAFPSRMTVNYLLQMCFGTAACKLGKTYDATAFEREDVVRDIAEAAKEAGIDCWDSVLHSGSTGRRLPTKIFMAPCPYQRLKHMVSGKMHSRTHGPTDALTRQPVAGRSREGGIKIGEMEQWCKISHGASESLKESVYDMSDKYEVPVCKECGRISDHFEYCRMCDATDMSLVKLPYTTKILFQELRSIGISIAFK.

2 stretches are compositionally biased toward low complexity: residues 1-54 (MSRG…SASS) and 692-701 (PAPSSSPSDS). 2 disordered regions span residues 1–63 (MSRG…PMSE) and 673–701 (RGSG…PSDS). Residue Asp823 coordinates Mg(2+). Residues Cys1174, Cys1177, Cys1187, and Cys1190 each contribute to the Zn(2+) site. A C4-type zinc finger spans residues 1174–1190 (CKECGRISDHFEYCRMC).

The protein belongs to the RNA polymerase beta chain family.

The catalysed reaction is RNA(n) + a ribonucleoside 5'-triphosphate = RNA(n+1) + diphosphate. Component of the DNA-dependent RNA polymerase that catalyzes the transcription of DNA into RNA using the four ribonucleoside triphosphates as substrates. Second largest component of RNA polymerase II which synthesizes mRNA precursors and many functional non-coding RNAs. Proposed to contribute to the polymerase catalytic activity and forms the polymerase active center together with the largest subunit. The polypeptide is Putative DNA-directed RNA polymerase II subunit RPB2 homolog (Dryophytes versicolor (chameleon treefrog)).